The primary structure comprises 562 residues: Undecaprenyl phosphate-alpha-4-amino-4-deoxy-L-arabinose arabinosyl transferase (562 aa).

Helical transmembrane passes span 14–34 (IKFSITIIAFILLYYLIPLNY), 91–111 (FSVRFGSFLFTLFSANLIYLF), 120–140 (ILSLNSVIIFLSILLVYIIGT), 142–162 (SVLDSIISFWINLSMISFWLA), 186–206 (FITKGFISLLIPFISIFIWLF), 215–235 (TIIHCFFSLLISILIIFPWIY), 267–287 (PFWYYFPIFIIGCLPWSGFLF), 302–322 (IEFYLLLWIIVQFCFFSISKG), 324–344 (LPTYILPCFFPLSILIAKNIE), 354–374 (LLKINSIINTIVGSTLLIFII), 395–415 (LILCIFSIFVWIFLNLCIIFN), and 425–445 (LSIIGIAFLFGLYVPEKIIYA).

It belongs to the glycosyltransferase 83 family.

Its subcellular location is the cell inner membrane. The enzyme catalyses 4-amino-4-deoxy-alpha-L-arabinopyranosyl di-trans,octa-cis-undecaprenyl phosphate + lipid IVA = lipid IIA + di-trans,octa-cis-undecaprenyl phosphate.. It participates in lipopolysaccharide metabolism; 4-amino-4-deoxy-beta-L-arabinose-lipid A biosynthesis. Catalyzes the transfer of the L-Ara4N moiety of the glycolipid undecaprenyl phosphate-alpha-L-Ara4N to lipid A. The modified arabinose is attached to lipid A and is required for resistance to polymyxin and cationic antimicrobial peptides. The sequence is that of Undecaprenyl phosphate-alpha-4-amino-4-deoxy-L-arabinose arabinosyl transferase from Wigglesworthia glossinidia brevipalpis.